A 238-amino-acid chain; its full sequence is E3 ubiquitin-protein ligase ZNRF2 (238 aa).

The interval 1 to 137 (MGAKQSGPAA…AGGGPGGPRL (137 aa)) is disordered. Gly-2 carries the N-myristoyl glycine lipid modification. 9 positions are modified to phosphoserine: Ser-20, Ser-24, Ser-75, Ser-82, Ser-107, Ser-110, Ser-141, Ser-147, and Ser-189. A compositionally biased stretch (low complexity) spans 35-77 (GARAARFAAPVSGAQQPSASAGAAAAAAAAASAPAAPRSRSLG). The RING-type; atypical zinc-finger motif lies at 195–236 (CAICLEELQQGDTIARLPCLCIYHKGCIDEWFEVNRSCPEHP).

As to quaternary structure, interacts with UBE2N. Interacts with ZNRF1. Interacts (when phosphorylated) with YWHAE. In terms of processing, phosphorylated; leading to binding to YWHAE. Phosphorylated by MTOR at Ser-147 and dephosphorylated by PP6C. Ser-147 phosphorylation stimulates vesicle-to-cytosol translocation. As to expression, expressed primarily in the nervous system. Expression is more intense in the granular cell layer of hippocampus, Purkinje cell layer of the cerebellum and the granular cell layer of the olfactory bulb. Detected in sensory neurons but not expressed in sympatic or enteric neurons. Expressed in testis, adipose tissue, columnar epithelial cells of the gut.

It is found in the endosome membrane. The protein localises to the lysosome membrane. The protein resides in the presynaptic cell membrane. It localises to the cytoplasm. It catalyses the reaction S-ubiquitinyl-[E2 ubiquitin-conjugating enzyme]-L-cysteine + [acceptor protein]-L-lysine = [E2 ubiquitin-conjugating enzyme]-L-cysteine + N(6)-ubiquitinyl-[acceptor protein]-L-lysine.. It functions in the pathway protein modification; protein ubiquitination. In terms of biological role, E3 ubiquitin-protein ligase that plays a role in the establishment and maintenance of neuronal transmission and plasticity. Ubiquitinates the Na(+)/K(+) ATPase alpha-1 subunit/ATP1A1 and thereby influences its endocytosis and/or degradation. Also acts as a positive regulator of mTORC1 activation by amino acids, which functions upstream of the V-ATPase and of Rag-GTPases. In turn, phosphorylation by mTOR leads to its inhibition via targeting to the cytosol allowing a self-regulating feedback mechanism. The polypeptide is E3 ubiquitin-protein ligase ZNRF2 (Znrf2) (Mus musculus (Mouse)).